The sequence spans 324 residues: MEVLGFSNSKMDVRAKRQLEIWMEMAPSKPEPQGKAQQSQPTSVLSAANAAQRGKCCCCREGHSPEDYGRQWAENVENHPEVAAHTSCLQSITPHFIAGEMGCTAKESQEQVPASITQILRNPWFSRLDSPRSRCLHLASSVDPIPGLQFFIVIVSDHQKVDREEEWKQGKIRKEIHWIPLFTMWSWLQCVEDRSIAGIPKLEHGDSHQTESLLDVLVGGFWGVPHTAPPRLQEAGGPTGGCGVGGQPLGGRGQWVGEETGPVGGPHAWWVPPTAPGTSLVLLVLLAQPFQSSEWMPVSSHTPPGTQTNTAALLNVCTSYSEYV.

This is an uncharacterized protein from Homo sapiens (Human).